A 126-amino-acid polypeptide reads, in one-letter code: Ribonuclease P protein component (126 aa).

It belongs to the RnpA family. As to quaternary structure, consists of a catalytic RNA component (M1 or rnpB) and a protein subunit.

The catalysed reaction is Endonucleolytic cleavage of RNA, removing 5'-extranucleotides from tRNA precursor.. Its function is as follows. RNaseP catalyzes the removal of the 5'-leader sequence from pre-tRNA to produce the mature 5'-terminus. It can also cleave other RNA substrates such as 4.5S RNA. The protein component plays an auxiliary but essential role in vivo by binding to the 5'-leader sequence and broadening the substrate specificity of the ribozyme. The chain is Ribonuclease P protein component from Brevibacillus brevis (strain 47 / JCM 6285 / NBRC 100599).